Here is a 410-residue protein sequence, read N- to C-terminus: uncharacterized protein (410 aa).

12 consecutive transmembrane segments (helical) span residues 27–47 (ILAL…VQSI), 63–83 (SLAL…TGPL), 97–117 (LFIA…ISIV), 118–138 (LLRA…MTYI), 145–165 (NSLS…GFLG), 180–200 (ISLM…LYFL), 228–248 (VLFF…TIFN), 254–274 (LMLE…TIYL), 293–313 (NNIL…TQYN), 316–332 (FIII…FFAS), 355–375 (YLFF…FFWF), and 378–398 (QWLG…FLSF).

This sequence belongs to the major facilitator superfamily.

It localises to the cell membrane. This is an uncharacterized protein from Buchnera aphidicola subsp. Acyrthosiphon pisum (strain APS) (Acyrthosiphon pisum symbiotic bacterium).